We begin with the raw amino-acid sequence, 419 residues long: MAPK/MAK/MRK overlapping kinase (419 aa).

The Protein kinase domain maps to 4–285; that stretch reads YKAIGKIGEG…AHQALQHPYF (282 aa). Residues 10 to 18 and Lys-33 each bind ATP; that span reads IGEGTFSEV. The Proton acceptor role is filled by Asp-128. Disordered regions lie at residues 285–344 and 390–419; these read FQEQ…RGPA and PASK…KGGR. Basic and acidic residues-rich tracts occupy residues 322–338 and 393–402; these read KEGR…EDRP and KKTDPQKDLK.

The protein belongs to the protein kinase superfamily. CMGC Ser/Thr protein kinase family. CDC2/CDKX subfamily. Mg(2+) serves as cofactor. In terms of processing, autophosphorylated. As to expression, expressed in heart, brain, lung, kidney, and pancreas, and at very low levels in placenta, liver and skeletal muscle. Detected in retina.

It is found in the cytoplasm. The protein resides in the cell projection. Its subcellular location is the cilium. The protein localises to the nucleus. The enzyme catalyses L-seryl-[protein] + ATP = O-phospho-L-seryl-[protein] + ADP + H(+). The catalysed reaction is L-threonyl-[protein] + ATP = O-phospho-L-threonyl-[protein] + ADP + H(+). Phosphorylation appears to increase the enzymatic activity. In terms of biological role, able to phosphorylate several exogenous substrates and to undergo autophosphorylation. Negatively regulates cilium length in a cAMP and mTORC1 signaling-dependent manner. This Homo sapiens (Human) protein is MAPK/MAK/MRK overlapping kinase (MOK).